The sequence spans 205 residues: uncharacterized protein (205 aa).

4 helical membrane passes run 18–38 (ATVNVIHPISLCLSWFLGTIG), 69–89 (LGIFQHLFYPIIPLLAFCFYA), 106–126 (VVWILAVSRHIVFLENSYYIM), and 127–147 (LLHPHHLHHPHPPFLIFLFLI).

It is found in the mitochondrion membrane. This is an uncharacterized protein from Arabidopsis thaliana (Mouse-ear cress).